Consider the following 167-residue polypeptide: MQGDPEVIEFLNEQLTAELTAINQYFLHAKLQDHKGWTKLAKYTRAESFDEMRHAEVLTDRILLLDGLPNYQRLFHVRVGQSVTEMFQADREVELEAIDRLRRGIEVMRAKHDITSANVFEAILADEEHHIDYLETQLDLIEKLGESLYLSTVIEQTQPDPSGPGSL.

A Ferritin-like diiron domain is found at 1-145 (MQGDPEVIEF…TQLDLIEKLG (145 aa)). Residues Glu-18 and Glu-51 each coordinate Fe cation. Met-52 contacts heme b. Fe cation contacts are provided by His-54, Glu-94, Glu-127, and His-130.

It belongs to the bacterioferritin family. Homooligomer of 24 subunits, arranged as 12 dimers, that are packed together to form an approximately spherical molecule with a central cavity, in which large amounts of iron can be deposited. Requires heme b as cofactor.

The catalysed reaction is 4 Fe(2+) + O2 + 4 H(+) = 4 Fe(3+) + 2 H2O. It catalyses the reaction Fe(2+)(in) = Fe(2+)(out). Functionally, iron-storage protein, whose ferroxidase center binds Fe(2+), oxidizes it using dioxygen to Fe(3+), and participates in the subsequent Fe(3+) oxide mineral core formation within the central cavity of the BFR protein shell. The polypeptide is Bacterioferritin (bfr) (Streptomyces coelicolor (strain ATCC BAA-471 / A3(2) / M145)).